Reading from the N-terminus, the 112-residue chain is Photosystem II reaction center Psb28 protein (112 aa).

It belongs to the Psb28 family. Part of the photosystem II complex.

It is found in the cellular thylakoid membrane. In Microcystis aeruginosa (strain NIES-843 / IAM M-2473), this protein is Photosystem II reaction center Psb28 protein.